We begin with the raw amino-acid sequence, 694 residues long: Beta-mannosyltransferase 8 (694 aa).

Residues 1–11 (MKFPKLRKRTV) are Cytoplasmic-facing. A helical transmembrane segment spans residues 12–29 (YWAVLTVFALFTIHFVFQ). Residues 30–694 (YKEHNSHRVQ…YLYDHASVNS (665 aa)) lie on the Extracellular side of the membrane. N-linked (GlcNAc...) asparagine glycosylation is found at asparagine 101 and asparagine 542.

This sequence belongs to the BMT family.

Its subcellular location is the membrane. Its function is as follows. Beta-mannosyltransferase involved in cell wall biosynthesis through beta-1,2-mannosylation of cell wall phosphopeptidomannan. Plays a role in the ability to produce hyphae in the presence of three bacterial species. The chain is Beta-mannosyltransferase 8 (BMT8) from Candida albicans (strain SC5314 / ATCC MYA-2876) (Yeast).